The following is an 89-amino-acid chain: NADH-ubiquinone oxidoreductase chain 4L (89 aa).

A run of 3 helical transmembrane segments spans residues 1–21, 22–42, and 57–77; these read MNIT…NRKN, IILM…LILV, and IYII…LVAF.

This sequence belongs to the complex I subunit 4L family.

The protein localises to the mitochondrion membrane. The enzyme catalyses a ubiquinone + NADH + 5 H(+)(in) = a ubiquinol + NAD(+) + 4 H(+)(out). In terms of biological role, core subunit of the mitochondrial membrane respiratory chain NADH dehydrogenase (Complex I) that is believed to belong to the minimal assembly required for catalysis. Complex I functions in the transfer of electrons from NADH to the respiratory chain. The immediate electron acceptor for the enzyme is believed to be ubiquinone. The chain is NADH-ubiquinone oxidoreductase chain 4L (ndh-4L) from Neurospora crassa (strain ATCC 24698 / 74-OR23-1A / CBS 708.71 / DSM 1257 / FGSC 987).